The following is a 179-amino-acid chain: Large ribosomal subunit protein uL5 (179 aa).

It belongs to the universal ribosomal protein uL5 family. In terms of assembly, part of the 50S ribosomal subunit; part of the 5S rRNA/L5/L18/L25 subcomplex. Contacts the 5S rRNA and the P site tRNA. Forms a bridge to the 30S subunit in the 70S ribosome.

In terms of biological role, this is one of the proteins that bind and probably mediate the attachment of the 5S RNA into the large ribosomal subunit, where it forms part of the central protuberance. In the 70S ribosome it contacts protein S13 of the 30S subunit (bridge B1b), connecting the 2 subunits; this bridge is implicated in subunit movement. Contacts the P site tRNA; the 5S rRNA and some of its associated proteins might help stabilize positioning of ribosome-bound tRNAs. This Pseudomonas fluorescens (strain ATCC BAA-477 / NRRL B-23932 / Pf-5) protein is Large ribosomal subunit protein uL5.